Here is a 239-residue protein sequence, read N- to C-terminus: Ribosomal RNA small subunit methyltransferase G (239 aa).

Residues G77, F82, 128–129, and R147 each bind S-adenosyl-L-methionine; that span reads AE. The disordered stretch occupies residues 215–239; it reads IRKTKSTPKKYPRKPGTPNKSPIEG. A compositionally biased stretch (basic residues) spans 216 to 227; it reads RKTKSTPKKYPR.

It belongs to the methyltransferase superfamily. RNA methyltransferase RsmG family.

It localises to the cytoplasm. In terms of biological role, specifically methylates the N7 position of guanine in position 535 of 16S rRNA. In Bacillus velezensis (strain DSM 23117 / BGSC 10A6 / LMG 26770 / FZB42) (Bacillus amyloliquefaciens subsp. plantarum), this protein is Ribosomal RNA small subunit methyltransferase G.